The chain runs to 87 residues: Small ribosomal subunit protein bS16 (87 aa).

This sequence belongs to the bacterial ribosomal protein bS16 family.

This Ehrlichia ruminantium (strain Gardel) protein is Small ribosomal subunit protein bS16.